A 127-amino-acid polypeptide reads, in one-letter code: Small ribosomal subunit protein uS13 (127 aa).

A disordered region spans residues 100–127; that stretch reads GQRTRTNARTRKGVRKTVAGKKKAPAKK. Residues 101–127 are compositionally biased toward basic residues; sequence QRTRTNARTRKGVRKTVAGKKKAPAKK.

It belongs to the universal ribosomal protein uS13 family. Part of the 30S ribosomal subunit. Forms a loose heterodimer with protein S19. Forms two bridges to the 50S subunit in the 70S ribosome.

Its function is as follows. Located at the top of the head of the 30S subunit, it contacts several helices of the 16S rRNA. In the 70S ribosome it contacts the 23S rRNA (bridge B1a) and protein L5 of the 50S subunit (bridge B1b), connecting the 2 subunits; these bridges are implicated in subunit movement. Contacts the tRNAs in the A and P-sites. The polypeptide is Small ribosomal subunit protein uS13 (Synechococcus sp. (strain JA-3-3Ab) (Cyanobacteria bacterium Yellowstone A-Prime)).